A 189-amino-acid polypeptide reads, in one-letter code: Small ribosomal subunit protein uS5 (189 aa).

Residues 22–85 (FVDKLVAINR…EAAKRDLIFV (64 aa)) form the S5 DRBM domain.

This sequence belongs to the universal ribosomal protein uS5 family. As to quaternary structure, part of the 30S ribosomal subunit. Contacts proteins S4 and S8.

Its function is as follows. With S4 and S12 plays an important role in translational accuracy. Functionally, located at the back of the 30S subunit body where it stabilizes the conformation of the head with respect to the body. The polypeptide is Small ribosomal subunit protein uS5 (Sinorhizobium medicae (strain WSM419) (Ensifer medicae)).